Here is a 420-residue protein sequence, read N- to C-terminus: Glycogen synthase kinase-3 beta (420 aa).

Over residues methionine 1 to glycine 24 the composition is skewed to polar residues. The interval methionine 1–arginine 50 is disordered. Positions tyrosine 56–phenylalanine 340 constitute a Protein kinase domain. ATP is bound by residues isoleucine 62–valine 70 and lysine 85. Aspartate 181 serves as the catalytic Proton acceptor. Positions asparagine 384 to serine 420 are disordered. Composition is skewed to low complexity over residues serine 389–asparagine 401 and asparagine 409–serine 420.

It belongs to the protein kinase superfamily. CMGC Ser/Thr protein kinase family. GSK-3 subfamily. Post-translationally, phosphorylated. Activated by phosphorylation at Tyr-216.

It is found in the cytoplasm. It localises to the nucleus. The protein localises to the cell membrane. It carries out the reaction L-seryl-[tau protein] + ATP = O-phospho-L-seryl-[tau protein] + ADP + H(+). The enzyme catalyses L-threonyl-[tau protein] + ATP = O-phospho-L-threonyl-[tau protein] + ADP + H(+). In terms of biological role, plays a role in the organization of the formation of the main body axis of developing embryo. Acts as an inhibitor of differentiation of primary neurons. Inhibits the ability of ectopically expressed NEUROD1 and other bHLH factors to promote early retinal cell differentiation. May participate in the Wnt signaling pathway. May regulate the circadian clock via phosphorylation of the major clock components. The polypeptide is Glycogen synthase kinase-3 beta (gsk3b) (Xenopus laevis (African clawed frog)).